Consider the following 604-residue polypeptide: uncharacterized protein (604 aa).

The protein belongs to the glycosyltransferase 2 family.

This is an uncharacterized protein from Rickettsia conorii (strain ATCC VR-613 / Malish 7).